A 534-amino-acid chain; its full sequence is NAD(P)H-quinone oxidoreductase chain 4 2 (534 aa).

A run of 14 helical transmembrane segments spans residues Phe9–Ile29, Trp51–Gly71, Leu106–Leu126, Leu130–Asp150, Leu152–Trp172, Phe184–Phe204, Leu227–His247, Thr258–Met278, Leu290–Thr310, Ile326–Gly346, Ala347–Ala367, Leu399–Gly419, Leu432–Met452, and Val479–Val499.

The protein belongs to the complex I subunit 4 family.

It localises to the cellular thylakoid membrane. It catalyses the reaction a plastoquinone + NADH + (n+1) H(+)(in) = a plastoquinol + NAD(+) + n H(+)(out). The enzyme catalyses a plastoquinone + NADPH + (n+1) H(+)(in) = a plastoquinol + NADP(+) + n H(+)(out). Functionally, NDH-1 shuttles electrons from NAD(P)H, via FMN and iron-sulfur (Fe-S) centers, to quinones in the respiratory chain. The immediate electron acceptor for the enzyme in this species is believed to be plastoquinone. Couples the redox reaction to proton translocation (for every two electrons transferred, four hydrogen ions are translocated across the cytoplasmic membrane), and thus conserves the redox energy in a proton gradient. This Synechococcus sp. (strain JA-2-3B'a(2-13)) (Cyanobacteria bacterium Yellowstone B-Prime) protein is NAD(P)H-quinone oxidoreductase chain 4 2.